Reading from the N-terminus, the 248-residue chain is Type II secretion system protein N (248 aa).

Over 1–6 (MKLKSG) the chain is Cytoplasmic. Residues 7-27 (IVTGVALVLAYGLFLASYAPA) form a helical; Signal-anchor for type II membrane protein membrane-spanning segment. At 28–248 (RLLTAVPLPA…RTLNFQGRLL (221 aa)) the chain is on the periplasmic side.

The protein belongs to the GSP N family.

It localises to the cell inner membrane. Its function is as follows. Involved in a type II secretion system (T2SS, formerly general secretion pathway, GSP) for the export of proteins. Required for the translocation of the multiple pectic enzymes. This Pectobacterium carotovorum subsp. carotovorum (Erwinia carotovora subsp. carotovora) protein is Type II secretion system protein N (outN).